The following is a 373-amino-acid chain: Queuine tRNA-ribosyltransferase (373 aa).

The Proton acceptor role is filled by D94. Substrate is bound by residues 94-98, D148, Q191, and G218; that span reads DSGGF. An RNA binding region spans residues 249-255; that stretch reads GVGTPDY. Catalysis depends on D268, which acts as the Nucleophile. Residues 273–277 form an RNA binding; important for wobble base 34 recognition region; sequence TRIGR. Zn(2+) contacts are provided by C306, C308, C311, and H337.

It belongs to the queuine tRNA-ribosyltransferase family. Homodimer. Within each dimer, one monomer is responsible for RNA recognition and catalysis, while the other monomer binds to the replacement base PreQ1. Zn(2+) serves as cofactor.

The catalysed reaction is 7-aminomethyl-7-carbaguanine + guanosine(34) in tRNA = 7-aminomethyl-7-carbaguanosine(34) in tRNA + guanine. It participates in tRNA modification; tRNA-queuosine biosynthesis. Its function is as follows. Catalyzes the base-exchange of a guanine (G) residue with the queuine precursor 7-aminomethyl-7-deazaguanine (PreQ1) at position 34 (anticodon wobble position) in tRNAs with GU(N) anticodons (tRNA-Asp, -Asn, -His and -Tyr). Catalysis occurs through a double-displacement mechanism. The nucleophile active site attacks the C1' of nucleotide 34 to detach the guanine base from the RNA, forming a covalent enzyme-RNA intermediate. The proton acceptor active site deprotonates the incoming PreQ1, allowing a nucleophilic attack on the C1' of the ribose to form the product. After dissociation, two additional enzymatic reactions on the tRNA convert PreQ1 to queuine (Q), resulting in the hypermodified nucleoside queuosine (7-(((4,5-cis-dihydroxy-2-cyclopenten-1-yl)amino)methyl)-7-deazaguanosine). This is Queuine tRNA-ribosyltransferase from Ruminiclostridium cellulolyticum (strain ATCC 35319 / DSM 5812 / JCM 6584 / H10) (Clostridium cellulolyticum).